We begin with the raw amino-acid sequence, 96 residues long: Plasminogen-like protein A (96 aa).

An N-terminal signal peptide occupies residues 1–19; sequence MEHKEVVLLLLLFLKSGQG. The 77-residue stretch at 20–96 folds into the PAN domain; sequence EPLDDYVNAQ…RMRDVVLFEK (77 aa). 2 disulfides stabilise this stretch: Cys-49/Cys-73 and Cys-53/Cys-61.

In terms of tissue distribution, expressed in liver.

It localises to the secreted. In terms of biological role, may bind non-covalently to lysine binding sites present in the kringle structures of plasminogen. This may interfere with the binding of fibrin or alpha-2-antiplasmin to plasminogen and may result in the localization of activity at sites necessary for extracellular matrix destruction. This is Plasminogen-like protein A (PLGLA) from Homo sapiens (Human).